Here is a 100-residue protein sequence, read N- to C-terminus: Small ribosomal subunit protein uS14c (100 aa).

This sequence belongs to the universal ribosomal protein uS14 family. In terms of assembly, part of the 30S ribosomal subunit.

The protein resides in the plastid. It localises to the chloroplast. Functionally, binds 16S rRNA, required for the assembly of 30S particles. The protein is Small ribosomal subunit protein uS14c of Lepidium virginicum (Virginia pepperweed).